Consider the following 1079-residue polypeptide: Translation initiation factor IF-2 (1079 aa).

3 stretches are compositionally biased toward basic and acidic residues: residues 52 to 65 (VQAQ…KEGN), 75 to 90 (RDGD…KAPE), and 102 to 134 (APER…KEPQ). Residues 52–488 (VQAQRDGGAR…RGKKDVRPAA (437 aa)) are disordered. Positions 150–184 (APVAKVVEAAPAETPAPEAPAVKATVTAEAAPAKT) are enriched in low complexity. The span at 185–194 (VEPESERPQA) shows a compositional bias: basic and acidic residues. Residues 276–291 (AAVAQQQMQQQAAQQQ) are compositionally biased toward low complexity. Over residues 306–327 (GGYRPEGQREGGYRPEGQREGG) the composition is skewed to basic and acidic residues. Low complexity-rich tracts occupy residues 348 to 370 (EGGY…GPRP) and 380 to 398 (PGAP…APRP). A compositionally biased stretch (gly residues) spans 419 to 429 (PRPGGFGGAPG). The segment covering 461–471 (PRGRSDDDVMR) has biased composition (basic and acidic residues). The segment covering 473–482 (PRGRGKRGKK) has biased composition (basic residues). A tr-type G domain is found at 578–745 (TRPPVVTIMG…LIAIQAEILE (168 aa)). The segment at 587-594 (GHVDHGKT) is G1. A GTP-binding site is contributed by 587 to 594 (GHVDHGKT). The interval 612 to 616 (GITQH) is G2. Residues 633–636 (DTPG) form a G3 region. Residues 633-637 (DTPGH) and 687-690 (NKMD) contribute to the GTP site. The interval 687–690 (NKMD) is G4. Positions 723–725 (SAK) are G5.

It belongs to the TRAFAC class translation factor GTPase superfamily. Classic translation factor GTPase family. IF-2 subfamily.

It localises to the cytoplasm. Its function is as follows. One of the essential components for the initiation of protein synthesis. Protects formylmethionyl-tRNA from spontaneous hydrolysis and promotes its binding to the 30S ribosomal subunits. Also involved in the hydrolysis of GTP during the formation of the 70S ribosomal complex. The sequence is that of Translation initiation factor IF-2 from Nitratidesulfovibrio vulgaris (strain ATCC 29579 / DSM 644 / CCUG 34227 / NCIMB 8303 / VKM B-1760 / Hildenborough) (Desulfovibrio vulgaris).